A 201-amino-acid chain; its full sequence is Small ribosomal subunit protein uS4 (201 aa).

In terms of domain architecture, S4 RNA-binding spans alanine 91–aspartate 151.

The protein belongs to the universal ribosomal protein uS4 family. Part of the 30S ribosomal subunit. Contacts protein S5. The interaction surface between S4 and S5 is involved in control of translational fidelity.

Functionally, one of the primary rRNA binding proteins, it binds directly to 16S rRNA where it nucleates assembly of the body of the 30S subunit. With S5 and S12 plays an important role in translational accuracy. The sequence is that of Small ribosomal subunit protein uS4 from Corynebacterium urealyticum (strain ATCC 43042 / DSM 7109).